The primary structure comprises 261 residues: HLA class II histocompatibility antigen, DQ beta 1 chain (261 aa).

A signal peptide spans 1-32 (MSWKKALRIPGGLRAATVTLMLAMLSTPVAEG). The interval 33 to 126 (RDSPEDFVYQ…LELRTTLQRR (94 aa)) is beta-1. Residues 33–230 (RDSPEDFVYQ…RAQSESAQSK (198 aa)) lie on the Extracellular side of the membrane. Cystine bridges form between C47–C111 and C149–C205. N51 carries N-linked (GlcNAc...) asparagine glycosylation. Residues 127 to 220 (VEPTVTISPS…SLQNPITVEW (94 aa)) are beta-2. An Ig-like C1-type domain is found at 129–217 (PTVTISPSRT…EHPSLQNPIT (89 aa)). The tract at residues 221-230 (RAQSESAQSK) is connecting peptide. Residues 231–251 (MLSGIGGFVLGLIFLGLGLII) form a helical membrane-spanning segment. The Cytoplasmic segment spans residues 252–261 (HHRSQKGLLH).

This sequence belongs to the MHC class II family. In terms of assembly, heterodimer of an alpha and a beta subunit; also referred as MHC class II molecule. In the endoplasmic reticulum (ER) it forms a heterononamer; 3 MHC class II molecules bind to a CD74 homotrimer (also known as invariant chain or HLA class II histocompatibility antigen gamma chain). In the endosomal/lysosomal system; CD74 undergoes sequential degradation by various proteases; leaving a small fragment termed CLIP on each MHC class II molecule. MHC class II molecule interacts with HLA_DM, and HLA_DO in B-cells, in order to release CLIP and facilitate the binding of antigenic peptides.

It is found in the cell membrane. The protein resides in the endoplasmic reticulum membrane. It localises to the golgi apparatus. Its subcellular location is the trans-Golgi network membrane. The protein localises to the endosome membrane. It is found in the lysosome membrane. In terms of biological role, binds peptides derived from antigens that access the endocytic route of antigen presenting cells (APC) and presents them on the cell surface for recognition by the CD4 T-cells. The peptide binding cleft accommodates peptides of 10-30 residues. The peptides presented by MHC class II molecules are generated mostly by degradation of proteins that access the endocytic route, where they are processed by lysosomal proteases and other hydrolases. Exogenous antigens that have been endocytosed by the APC are thus readily available for presentation via MHC II molecules, and for this reason this antigen presentation pathway is usually referred to as exogenous. As membrane proteins on their way to degradation in lysosomes as part of their normal turn-over are also contained in the endosomal/lysosomal compartments, exogenous antigens must compete with those derived from endogenous components. Autophagy is also a source of endogenous peptides, autophagosomes constitutively fuse with MHC class II loading compartments. In addition to APCs, other cells of the gastrointestinal tract, such as epithelial cells, express MHC class II molecules and CD74 and act as APCs, which is an unusual trait of the GI tract. To produce a MHC class II molecule that presents an antigen, three MHC class II molecules (heterodimers of an alpha and a beta chain) associate with a CD74 trimer in the ER to form a heterononamer. Soon after the entry of this complex into the endosomal/lysosomal system where antigen processing occurs, CD74 undergoes a sequential degradation by various proteases, including CTSS and CTSL, leaving a small fragment termed CLIP (class-II-associated invariant chain peptide). The removal of CLIP is facilitated by HLA-DM via direct binding to the alpha-beta-CLIP complex so that CLIP is released. HLA-DM stabilizes MHC class II molecules until primary high affinity antigenic peptides are bound. The MHC II molecule bound to a peptide is then transported to the cell membrane surface. In B-cells, the interaction between HLA-DM and MHC class II molecules is regulated by HLA-DO. Primary dendritic cells (DCs) also to express HLA-DO. Lysosomal microenvironment has been implicated in the regulation of antigen loading into MHC II molecules, increased acidification produces increased proteolysis and efficient peptide loading. This Homo sapiens (Human) protein is HLA class II histocompatibility antigen, DQ beta 1 chain (HLA-DQB1).